The chain runs to 283 residues: Non-selective voltage-gated ion channel VDAC1 (283 aa).

Position 2 is an N-acetylalanine (A2). K12 provides a ligand contact to ATP. A Glycyl lysine isopeptide (Lys-Gly) (interchain with G-Cter in ubiquitin) cross-link involves residue K12. S13 carries the post-translational modification Phosphoserine. The residue at position 19 (T19) is a Phosphothreonine. Residue K20 coordinates ATP. K20 bears the N6-acetyllysine; alternate mark. K20 is subject to N6-succinyllysine; alternate. K20 participates in a covalent cross-link: Glycyl lysine isopeptide (Lys-Gly) (interchain with G-Cter in ubiquitin); alternate. The next 2 beta stranded transmembrane spans lie at 26-35 and 39-47; these read LIKLDLKTKS and LEFTSSGSA. Residues K53 and K61 each participate in a glycyl lysine isopeptide (Lys-Gly) (interchain with G-Cter in ubiquitin) cross-link. Residues 54-64 traverse the membrane as a beta stranded segment; it reads VTGSLETKYRW. Y67 is subject to Phosphotyrosine. The next 3 membrane-spanning stretches (beta stranded) occupy residues 69-76, 80-89, and 95-104; these read LTFTEKWN, TLGTEITVED, and LKLTFDSSFS. T107 carries the phosphothreonine modification. Residue K109 is modified to N6-acetyllysine; alternate. K109 participates in a covalent cross-link: Glycyl lysine isopeptide (Lys-Gly) (interchain with G-Cter in ubiquitin); alternate. Residue K110 forms a Glycyl lysine isopeptide (Lys-Gly) (interchain with G-Cter in ubiquitin) linkage. 4 beta stranded membrane-spanning segments follow: residues 111–120, 123–130, 137–145, and 150–158; these read NAKIKTGYKR, INLGCDVD, SIRGALVLG, and LAGYQMNFE. A Glycyl lysine isopeptide (Lys-Gly) (interchain with G-Cter in ubiquitin) cross-link involves residue K161. 6 consecutive transmembrane segments (beta stranded) span residues 163–175, 178–185, 189–198, 202–211, 218–227, and 231–238; these read RVTQSNFAVGYKT, FQLHTNVN, EFGGSIYQKV, LETAVNLAWT, RFGIAAKYQI, and ACFSAKVN. A Phosphoserine; by NEK1 modification is found at S193. S240 carries the phosphoserine modification. Residue 242-244 participates in NAD(+) binding; sequence LIG. A beta stranded membrane pass occupies residues 242–251; it reads LIGLGYTQTL. Position 252 is an N6-acetyllysine (K252). A beta stranded membrane pass occupies residues 254–263; it reads GIKLTLSALL. 260–264 lines the NAD(+) pocket; sequence SALLD. At K266 the chain carries N6-acetyllysine; alternate. A Glycyl lysine isopeptide (Lys-Gly) (interchain with G-Cter in ubiquitin); alternate cross-link involves residue K266. Residues 273 to 282 form a beta stranded membrane-spanning segment; that stretch reads HKLGLGLEFQ. K274 participates in a covalent cross-link: Glycyl lysine isopeptide (Lys-Gly) (interchain with G-Cter in ubiquitin).

It belongs to the eukaryotic mitochondrial porin family. As to quaternary structure, homodimer and homotrimer; in response to cyclic AMP or calcium; oligomerization is required for scramblase activity. Component of the mitochondrial permeability transition pore complex (mPTPC), at least composed of SPG7, VDAC1 and PPIF. Interacts with SPG7, NIPSNAP2 and SLC25A30. Interacts with hexokinases including HK1. The HK1-VDAC1 complex interacts with ATF2. Interacts with BCL2L1. Interacts with BAK1. Interacts with RTL10/BOP (via BH3 domain). Interacts with amyloid-beta and APP; induces VDAC1 dephosphorylation. Interacts with TMEM41B. Interacts with BCAP31. Interacts with HSPA9; this interaction couples ITPR1 to VDAC1. Post-translationally, phosphorylation at Ser-193 by NEK1 promotes the closed conformational state preventing excessive mitochondrial membrane permeability and subsequent apoptotic cell death after injury. Phosphorylation by the AKT-GSK3B axis stabilizes the protein probably by preventing ubiquitin-mediated proteasomal degradation. In terms of processing, ubiquitinated. Undergoes monoubiquitination and polyubiquitination by PRKN; monoubiquitination at Lys-274 inhibits apoptosis, whereas polyubiquitination leads to its degradation and promotes mitophagy. Deubiquitinated by USP30. As to expression, predominantly in brain astrocytes.

It is found in the mitochondrion outer membrane. It localises to the cell membrane. The protein localises to the membrane raft. It carries out the reaction chloride(in) = chloride(out). The enzyme catalyses K(+)(in) = K(+)(out). The catalysed reaction is ATP(in) = ATP(out). It catalyses the reaction Ca(2+)(in) = Ca(2+)(out). It carries out the reaction Na(+)(in) = Na(+)(out). The enzyme catalyses Mg(2+)(in) = Mg(2+)(out). The catalysed reaction is L-glutamate(out) = L-glutamate(in). It catalyses the reaction dopamine(out) = dopamine(in). It carries out the reaction acetylcholine(in) = acetylcholine(out). The enzyme catalyses Fe(III)-[cytochrome c](out) = Fe(III)-[cytochrome c](in). The catalysed reaction is a 1,2-diacyl-sn-glycero-3-phosphocholine(in) = a 1,2-diacyl-sn-glycero-3-phosphocholine(out). It catalyses the reaction a 1,2-diacyl-sn-glycero-3-phospho-L-serine(in) = a 1,2-diacyl-sn-glycero-3-phospho-L-serine(out). Its activity is regulated as follows. Inhibited by nitric oxide. Non-selective voltage-gated ion channel that mediates the transport of anions and cations through the mitochondrion outer membrane and plasma membrane. The channel at the outer mitochondrial membrane allows diffusion of small hydrophilic molecules; in the plasma membrane it is involved in cell volume regulation and apoptosis. It adopts an open conformation at low or zero membrane potential and a closed conformation at potentials above 30-40 mV. The open state has a weak anion selectivity whereas the closed state is cation-selective. Binds various signaling molecules, including the sphingolipid ceramide, the phospholipid phosphatidylcholine, and the sterols cholesterol and oxysterol. In depolarized mitochondria, acts downstream of PRKN and PINK1 to promote mitophagy or prevent apoptosis; polyubiquitination by PRKN promotes mitophagy, while monoubiquitination by PRKN decreases mitochondrial calcium influx which ultimately inhibits apoptosis. May participate in the formation of the permeability transition pore complex (PTPC) responsible for the release of mitochondrial products that triggers apoptosis. May mediate ATP export from cells. Part of a complex composed of HSPA9, ITPR1 and VDAC1 that regulates mitochondrial calcium-dependent apoptosis by facilitating calcium transport from the ER lumen to the mitochondria intermembrane space thus providing calcium for the downstream calcium channel MCU that directly releases it into mitochondria matrix. Mediates cytochrome c efflux. In terms of biological role, catalyzes the scrambling of phospholipids across the outer mitochondrial membrane; the mechanism is unrelated to channel activity and is capable of translocating both anionic and zwitterionic phospholipids. The chain is Non-selective voltage-gated ion channel VDAC1 from Bos taurus (Bovine).